A 505-amino-acid chain; its full sequence is Deoxyguanosinetriphosphate triphosphohydrolase (505 aa).

One can recognise an HD domain in the interval 66 to 273; that stretch reads RLTHSMEVQQ…MEAADDISYC (208 aa).

Belongs to the dGTPase family. Type 1 subfamily. In terms of assembly, homotetramer. Mg(2+) serves as cofactor.

The enzyme catalyses dGTP + H2O = 2'-deoxyguanosine + triphosphate + H(+). Functionally, dGTPase preferentially hydrolyzes dGTP over the other canonical NTPs. The sequence is that of Deoxyguanosinetriphosphate triphosphohydrolase from Salmonella choleraesuis (strain SC-B67).